The sequence spans 222 residues: Eukaryotic translation initiation factor 3 subunit K (222 aa).

A PCI domain is found at 46–208 (YDLEANLAVL…KIKTKNITEK (163 aa)).

Belongs to the eIF-3 subunit K family. In terms of assembly, component of the eukaryotic translation initiation factor 3 (eIF-3) complex. The eIF-3 complex interacts with pix.

Its subcellular location is the cytoplasm. Its function is as follows. Component of the eukaryotic translation initiation factor 3 (eIF-3) complex, which is involved in protein synthesis of a specialized repertoire of mRNAs and, together with other initiation factors, stimulates binding of mRNA and methionyl-tRNAi to the 40S ribosome. The eIF-3 complex specifically targets and initiates translation of a subset of mRNAs involved in cell proliferation. The sequence is that of Eukaryotic translation initiation factor 3 subunit K from Drosophila yakuba (Fruit fly).